Reading from the N-terminus, the 532-residue chain is Phosphoenolpyruvate carboxykinase (ATP) (532 aa).

Substrate is bound by residues arginine 58, tyrosine 194, and lysine 200. ATP contacts are provided by residues lysine 200, histidine 220, and 236 to 244 (GLSGTGKTT). Mn(2+) is bound by residues lysine 200 and histidine 220. Aspartate 257 contributes to the Mn(2+) binding site. Residues glutamate 285, arginine 322, 442–443 (RV), and threonine 448 contribute to the ATP site. Substrate is bound at residue arginine 322.

Belongs to the phosphoenolpyruvate carboxykinase (ATP) family. Mn(2+) serves as cofactor.

It is found in the cytoplasm. The catalysed reaction is oxaloacetate + ATP = phosphoenolpyruvate + ADP + CO2. It functions in the pathway carbohydrate biosynthesis; gluconeogenesis. In terms of biological role, involved in the gluconeogenesis. Catalyzes the conversion of oxaloacetate (OAA) to phosphoenolpyruvate (PEP) through direct phosphoryl transfer between the nucleoside triphosphate and OAA. The sequence is that of Phosphoenolpyruvate carboxykinase (ATP) from Rubrobacter xylanophilus (strain DSM 9941 / JCM 11954 / NBRC 16129 / PRD-1).